A 101-amino-acid chain; its full sequence is uncharacterized protein (101 aa).

A run of 2 helical transmembrane segments spans residues 3 to 23 (IVYE…LFLF) and 39 to 59 (AFLS…LIFF).

The protein resides in the membrane. This is an uncharacterized protein from Saccharomyces cerevisiae (strain ATCC 204508 / S288c) (Baker's yeast).